A 314-amino-acid polypeptide reads, in one-letter code: Methenyltetrahydromethanopterin cyclohydrolase (314 aa).

This sequence belongs to the MCH family.

The protein localises to the cytoplasm. It catalyses the reaction 5,10-methenyl-5,6,7,8-tetrahydromethanopterin + H2O = N(5)-formyl-5,6,7,8-tetrahydromethanopterin + H(+). Its pathway is one-carbon metabolism; methanogenesis from CO(2); 5,10-methenyl-5,6,7,8-tetrahydromethanopterin from CO(2): step 3/3. Catalyzes the reversible interconversion of 5-formyl-H(4)MPT to methenyl-H(4)MPT(+). The sequence is that of Methenyltetrahydromethanopterin cyclohydrolase from Methanoregula boonei (strain DSM 21154 / JCM 14090 / 6A8).